Consider the following 409-residue polypeptide: Serine/threonine transporter SstT (409 aa).

9 helical membrane-spanning segments follow: residues 14–34 (GSLV…ATLS), 48–68 (FVGA…AASI), 82–102 (IVIL…LMSF), 141–161 (ALMT…GLAL), 192–212 (IGIF…AIAG), 216–236 (LLLV…PAIV), 290–310 (IPLG…ILTL), 322–342 (ILTA…ASGV), and 357–377 (FGIS…IGVI).

It belongs to the dicarboxylate/amino acid:cation symporter (DAACS) (TC 2.A.23) family.

The protein localises to the cell inner membrane. The catalysed reaction is L-serine(in) + Na(+)(in) = L-serine(out) + Na(+)(out). It catalyses the reaction L-threonine(in) + Na(+)(in) = L-threonine(out) + Na(+)(out). Functionally, involved in the import of serine and threonine into the cell, with the concomitant import of sodium (symport system). The polypeptide is Serine/threonine transporter SstT (Shewanella woodyi (strain ATCC 51908 / MS32)).